The chain runs to 359 residues: GTP 3',8-cyclase (359 aa).

One can recognise a Radical SAM core domain in the interval 33–260 (RFGRRHDSLR…PTGRENPSAP (228 aa)). Arginine 42 is a binding site for GTP. [4Fe-4S] cluster is bound by residues cysteine 49 and cysteine 53. An S-adenosyl-L-methionine-binding site is contributed by tyrosine 55. [4Fe-4S] cluster is bound at residue cysteine 56. Arginine 93 contributes to the GTP binding site. Residue glycine 97 coordinates S-adenosyl-L-methionine. Threonine 124 contacts GTP. An S-adenosyl-L-methionine-binding site is contributed by serine 148. GTP is bound at residue lysine 185. Methionine 219 is a binding site for S-adenosyl-L-methionine. Residues cysteine 286 and cysteine 289 each contribute to the [4Fe-4S] cluster site. 291–293 (RLR) serves as a coordination point for GTP. Residue cysteine 303 coordinates [4Fe-4S] cluster.

Belongs to the radical SAM superfamily. MoaA family. In terms of assembly, monomer and homodimer. [4Fe-4S] cluster is required as a cofactor.

It carries out the reaction GTP + AH2 + S-adenosyl-L-methionine = (8S)-3',8-cyclo-7,8-dihydroguanosine 5'-triphosphate + 5'-deoxyadenosine + L-methionine + A + H(+). Its pathway is cofactor biosynthesis; molybdopterin biosynthesis. Its function is as follows. Catalyzes the cyclization of GTP to (8S)-3',8-cyclo-7,8-dihydroguanosine 5'-triphosphate. This chain is GTP 3',8-cyclase, found in Rhodopirellula baltica (strain DSM 10527 / NCIMB 13988 / SH1).